The following is a 486-amino-acid chain: Keratin-3, type I cytoskeletal 51 kDa (486 aa).

The segment at 1–125 is head; that stretch reads MSNYSIKQSA…AGGMDIFSTN (125 aa). A coil 1A region spans residues 126-161; the sequence is EKQTMQNLNDRLASYLDKVHALETANTELERKIKEW. Residues 126 to 442 form the IF rod domain; that stretch reads EKQTMQNLND…RLLDGDLSKP (317 aa). A linker 1 region spans residues 162-184; sequence YEKQRPGSSSGDGAKDYSKYYTM. A coil 1B region spans residues 185-276; that stretch reads INDLKNQIIA…KNHEDELKGM (92 aa). A linker 12 region spans residues 277 to 299; sequence QVTQVGQVNVEMNAAPSSDLTKI. The segment at 300 to 438 is coil 2; that stretch reads LNDMRSQYED…ETYRRLLDGD (139 aa). The tract at residues 435–466 is disordered; sequence LDGDLSKPKSGGGTSTNTGSTSSKGSTRTVKR. The segment at 439–486 is tail; it reads LSKPKSGGGTSTNTGSTSSKGSTRTVKRREIIEEVVDGKVVSTKVVDM. Residues 449 to 461 show a composition bias toward low complexity; that stretch reads STNTGSTSSKGST.

This sequence belongs to the intermediate filament family. Heterotetramer of two type I and two type II keratins.

This is Keratin-3, type I cytoskeletal 51 kDa from Xenopus laevis (African clawed frog).